We begin with the raw amino-acid sequence, 575 residues long: Proline--tRNA ligase (575 aa).

It belongs to the class-II aminoacyl-tRNA synthetase family. ProS type 1 subfamily. As to quaternary structure, homodimer.

The protein resides in the cytoplasm. The catalysed reaction is tRNA(Pro) + L-proline + ATP = L-prolyl-tRNA(Pro) + AMP + diphosphate. Functionally, catalyzes the attachment of proline to tRNA(Pro) in a two-step reaction: proline is first activated by ATP to form Pro-AMP and then transferred to the acceptor end of tRNA(Pro). As ProRS can inadvertently accommodate and process non-cognate amino acids such as alanine and cysteine, to avoid such errors it has two additional distinct editing activities against alanine. One activity is designated as 'pretransfer' editing and involves the tRNA(Pro)-independent hydrolysis of activated Ala-AMP. The other activity is designated 'posttransfer' editing and involves deacylation of mischarged Ala-tRNA(Pro). The misacylated Cys-tRNA(Pro) is not edited by ProRS. The protein is Proline--tRNA ligase of Anaeromyxobacter sp. (strain Fw109-5).